We begin with the raw amino-acid sequence, 244 residues long: 3-oxoacyl-[acyl-carrier-protein] reductase FabG (244 aa).

NADP(+) is bound by residues 12-15, T37, 59-60, and N86; these read GASR and NV. S138 contributes to the substrate binding site. The active-site Proton acceptor is the Y151. Residues 151-155 and I184 each bind NADP(+); that span reads YAAAK.

The protein belongs to the short-chain dehydrogenases/reductases (SDR) family. In terms of assembly, homotetramer.

The catalysed reaction is a (3R)-hydroxyacyl-[ACP] + NADP(+) = a 3-oxoacyl-[ACP] + NADPH + H(+). The protein operates within lipid metabolism; fatty acid biosynthesis. Catalyzes the NADPH-dependent reduction of beta-ketoacyl-ACP substrates to beta-hydroxyacyl-ACP products, the first reductive step in the elongation cycle of fatty acid biosynthesis. The polypeptide is 3-oxoacyl-[acyl-carrier-protein] reductase FabG (fabG) (Vibrio harveyi (Beneckea harveyi)).